Reading from the N-terminus, the 205-residue chain is Metal-independent carbonic anhydrase (205 aa).

Positions 1-24 are cleaved as a signal peptide; sequence MNLFKPRILVLFAATALISGIAIV. Hydrogencarbonate contacts are provided by Thr106 and Tyr124.

It belongs to the iota-class carbonic anhydrase family. Homotetramer; dimer of dimers. Does not require a metal cofactor. serves as cofactor.

The catalysed reaction is hydrogencarbonate + H(+) = CO2 + H2O. With respect to regulation, activity is not affected by EDTA or 2,6-pyridinedicarboxylic acid (PDA). Activity is not affected by addition of most divalent metal ions, except zinc ions which decrease the activity. Inhibited by the iodide ion. Its function is as follows. Catalyzes the hydration of carbon dioxide (CO2) to bicarbonate (HCO3(-)). Has only very low bicarbonate dehydration activity. May function even in metal-poor environments. This chain is Metal-independent carbonic anhydrase, found in Nostoc sp. (strain PCC 7120 / SAG 25.82 / UTEX 2576).